The sequence spans 71 residues: Gas vesicle protein A (71 aa).

The segment at 12–22 (LAEVIDRILDK) is alpha helix 1. Residues 26 to 34 (IDAWARVSL) are beta-strand 1. The tract at residues 35–37 (VGI) is beta turn. Residues 38-46 (ELLAIEARV) form a beta-strand 2 region. Positions 51 to 70 (VETYLKYAEAVGLTQXAXXA) are alpha helix 2.

Belongs to the gas vesicle GvpA family. In terms of assembly, the gas vesicle shell is 2 nm thick and consists of a single layer of this protein. It forms helical ribs nearly perpendicular to the long axis of the vesicle.

The protein resides in the gas vesicle shell. Its function is as follows. Gas vesicles are hollow, gas filled proteinaceous nanostructures found in some microorganisms. During planktonic growth they allow positioning of the organism at a favorable depth for light or nutrient acquisition. GvpA forms the protein shell. The chain is Gas vesicle protein A from Microcystis sp. (strain BC 84/1).